A 184-amino-acid polypeptide reads, in one-letter code: Probable RNA 2'-phosphotransferase (184 aa).

This sequence belongs to the KptA/TPT1 family.

Its function is as follows. Removes the 2'-phosphate from RNA via an intermediate in which the phosphate is ADP-ribosylated by NAD followed by a presumed transesterification to release the RNA and generate ADP-ribose 1''-2''-cyclic phosphate (APPR&gt;P). May function as an ADP-ribosylase. This chain is Probable RNA 2'-phosphotransferase, found in Burkholderia pseudomallei (strain K96243).